Reading from the N-terminus, the 203-residue chain is MNKGKLFVISAPSGAGKTTILGRVMANVGRLNFSISHTTRTARPGEQDGVDYHFVEQEDFIEMQEKGIFLESAYVHKNYYGTSREAVMAQLSEGVDVVLDIDVQGATILMESASLPATYIFIAPPDLSVLEERLRKRGSDSEETIKLRMGNAAGEMLSSRKYDYLIVNDDLAQASTLLKSIIWAERAKSRRTPAGLPIKLVVE.

Residues 4–183 enclose the Guanylate kinase-like domain; that stretch reads GKLFVISAPS…ASTLLKSIIW (180 aa). 11–18 contacts ATP; it reads APSGAGKT.

Belongs to the guanylate kinase family.

The protein resides in the cytoplasm. It carries out the reaction GMP + ATP = GDP + ADP. Functionally, essential for recycling GMP and indirectly, cGMP. The sequence is that of Guanylate kinase from Desulfotalea psychrophila (strain LSv54 / DSM 12343).